The sequence spans 158 residues: Non-secretory ribonuclease (158 aa).

Residues 1-27 (MVPKLFTSQICLLPLLGLLSAEGSPHA) form the signal peptide. His-42 serves as the catalytic Proton acceptor. Tyr-60 is modified (3'-nitrotyrosine). 65–69 (KNKNT) serves as a coordination point for substrate. Asn-86, Asn-92, and Asn-111 each carry an N-linked (GlcNAc...) asparagine glycan. The active-site Proton donor is His-153.

Belongs to the pancreatic ribonuclease family. As to quaternary structure, interacts with and forms a tight 1:1 complex with RNH1. Dimerization of two such complexes may occur.

Its subcellular location is the lysosome. The protein localises to the cytoplasmic granule. The enzyme catalyses an [RNA] containing cytidine + H2O = an [RNA]-3'-cytidine-3'-phosphate + a 5'-hydroxy-ribonucleotide-3'-[RNA].. It carries out the reaction an [RNA] containing uridine + H2O = an [RNA]-3'-uridine-3'-phosphate + a 5'-hydroxy-ribonucleotide-3'-[RNA].. Its function is as follows. This is a non-secretory ribonuclease. It is a pyrimidine specific nuclease with a slight preference for U. Cytotoxin and helminthotoxin. Possesses a wide variety of biological activities. The chain is Non-secretory ribonuclease (RNASE2) from Callithrix jacchus (White-tufted-ear marmoset).